Consider the following 539-residue polypeptide: Glycerol kinase (539 aa).

Threonine 49 lines the ADP pocket. ATP is bound by residues threonine 49, threonine 50, and serine 51. Threonine 49 contacts sn-glycerol 3-phosphate. Arginine 53 contributes to the ADP binding site. Sn-glycerol 3-phosphate contacts are provided by arginine 119, glutamate 120, tyrosine 171, and aspartate 280. Residues arginine 119, glutamate 120, tyrosine 171, aspartate 280, and glutamine 281 each coordinate glycerol. Residues threonine 302 and glycine 345 each contribute to the ADP site. Threonine 302, glycine 345, glutamine 349, and glycine 446 together coordinate ATP. ADP contacts are provided by glycine 446 and asparagine 450.

This sequence belongs to the FGGY kinase family.

The catalysed reaction is glycerol + ATP = sn-glycerol 3-phosphate + ADP + H(+). It participates in polyol metabolism; glycerol degradation via glycerol kinase pathway; sn-glycerol 3-phosphate from glycerol: step 1/1. Inhibited by fructose 1,6-bisphosphate (FBP). In terms of biological role, key enzyme in the regulation of glycerol uptake and metabolism. Catalyzes the phosphorylation of glycerol to yield sn-glycerol 3-phosphate. This Rhodopirellula baltica (strain DSM 10527 / NCIMB 13988 / SH1) protein is Glycerol kinase.